The sequence spans 283 residues: Thymidylate synthase (283 aa).

DUMP is bound at residue Arg-22. Cys-160 (nucleophile) is an active-site residue. DUMP contacts are provided by residues 180–183, Asn-191, and 221–223; these read RSCD and HIY. Position 183 (Asp-183) interacts with (6R)-5,10-methylene-5,6,7,8-tetrahydrofolate. Residue Ser-282 coordinates (6R)-5,10-methylene-5,6,7,8-tetrahydrofolate.

It belongs to the thymidylate synthase family. Bacterial-type ThyA subfamily. In terms of assembly, homodimer.

It localises to the cytoplasm. The enzyme catalyses dUMP + (6R)-5,10-methylene-5,6,7,8-tetrahydrofolate = 7,8-dihydrofolate + dTMP. The protein operates within pyrimidine metabolism; dTTP biosynthesis. Functionally, catalyzes the reductive methylation of 2'-deoxyuridine-5'-monophosphate (dUMP) to 2'-deoxythymidine-5'-monophosphate (dTMP) while utilizing 5,10-methylenetetrahydrofolate (mTHF) as the methyl donor and reductant in the reaction, yielding dihydrofolate (DHF) as a by-product. This enzymatic reaction provides an intracellular de novo source of dTMP, an essential precursor for DNA biosynthesis. This chain is Thymidylate synthase, found in Haemophilus influenzae (strain 86-028NP).